A 229-amino-acid polypeptide reads, in one-letter code: Putative N-acetylmannosamine-6-phosphate 2-epimerase (229 aa).

It belongs to the NanE family.

It catalyses the reaction an N-acyl-D-glucosamine 6-phosphate = an N-acyl-D-mannosamine 6-phosphate. It participates in amino-sugar metabolism; N-acetylneuraminate degradation; D-fructose 6-phosphate from N-acetylneuraminate: step 3/5. Converts N-acetylmannosamine-6-phosphate (ManNAc-6-P) to N-acetylglucosamine-6-phosphate (GlcNAc-6-P). This chain is Putative N-acetylmannosamine-6-phosphate 2-epimerase, found in Salmonella arizonae (strain ATCC BAA-731 / CDC346-86 / RSK2980).